A 583-amino-acid polypeptide reads, in one-letter code: uncharacterized protein (583 aa).

24-140 contributes to the a nucleoside 3',5'-cyclic phosphate binding site; the sequence is ILADIDDEQL…SAMLRAMARM (117 aa). Positions 309–469 constitute a PNPLA domain; it reads LVMAGGGARG…LNNLPANVMC (161 aa). A GXGXXG motif is present at residues 313–318; that stretch reads GGGARG. Residues 340–344 carry the GXSXG motif; the sequence is GTSSG. The active-site Nucleophile is the serine 342. Catalysis depends on aspartate 456, which acts as the Proton acceptor. Positions 456-458 match the DGA/G motif; that stretch reads DGG.

The protein belongs to the NTE family.

This is an uncharacterized protein from Mycobacterium tuberculosis (strain CDC 1551 / Oshkosh).